A 293-amino-acid chain; its full sequence is 4-hydroxybenzoate octaprenyltransferase (293 aa).

The next 8 helical transmembrane spans lie at 19 to 39 (PIGI…ASNG), 43 to 63 (WLIL…GCVV), 95 to 115 (LLAA…NALV), 135 to 155 (FFAI…PMSY), 158 to 178 (LWGE…FWAI), 209 to 229 (LTAI…VGAL), 231 to 251 (DFSG…VYHL), and 266 to 286 (FLHN…HFLL).

This sequence belongs to the UbiA prenyltransferase family. Mg(2+) is required as a cofactor.

Its subcellular location is the cell inner membrane. It catalyses the reaction all-trans-octaprenyl diphosphate + 4-hydroxybenzoate = 4-hydroxy-3-(all-trans-octaprenyl)benzoate + diphosphate. The protein operates within cofactor biosynthesis; ubiquinone biosynthesis. Catalyzes the prenylation of para-hydroxybenzoate (PHB) with an all-trans polyprenyl group. Mediates the second step in the final reaction sequence of ubiquinone-8 (UQ-8) biosynthesis, which is the condensation of the polyisoprenoid side chain with PHB, generating the first membrane-bound Q intermediate 3-octaprenyl-4-hydroxybenzoate. This is 4-hydroxybenzoate octaprenyltransferase from Thiobacillus denitrificans (strain ATCC 25259 / T1).